The chain runs to 484 residues: Hemogen (484 aa).

Residues Met1–Ser25 show a composition bias toward basic and acidic residues. Disordered stretches follow at residues Met1–Trp32 and Lys44–Gln91. Positions Gln7 to Glu87 are necessary for nuclear localization. Residues Lys61–Gln79 show a composition bias toward basic residues. Residues Ser123, Ser159, Ser181, Ser188, and Ser201 each carry the phosphoserine modification. Thr246 bears the Phosphothreonine mark. Disordered stretches follow at residues Asp265–Gly290, Glu306–Glu369, and Gln386–Glu471. The segment covering Glu306–Glu320 has biased composition (basic and acidic residues). A phosphoserine mark is found at Ser349 and Ser353. The residue at position 360 (Thr360) is a Phosphothreonine. Phosphoserine is present on residues Ser363 and Ser367. Basic and acidic residues-rich tracts occupy residues Tyr413 to Gln428, Pro438 to Asp447, and Glu454 to Pro463.

In terms of tissue distribution, expressed in hematopoietic precursor cells, thyroid and spermatids (at protein level). Expressed in bone marrow, testis, thymus. Expressed in prostate cancer and ovarian cancer. Also expressed in thymus and thyroid tumors, non-Hodgkin lymphoma, various leukemia cell lines, peripheral blood mononuclear cells (PBMCs) and bone marrow mononuclear cells (BMMCs) of patients with leukemia.

It localises to the nucleus. Its function is as follows. Regulates the proliferation and differentiation of hematopoietic cells. Overexpression block the TPA-induced megakaryocytic differentiation in the K562 cell model. May also prevent cell apoptosis through the activation of the nuclear factor-kappa B (NF-kB). The polypeptide is Hemogen (HEMGN) (Homo sapiens (Human)).